The chain runs to 195 residues: Adenylate kinase (195 aa).

8-16 is a binding site for ATP; it reads GIPGVGKTT.

The protein belongs to the archaeal adenylate kinase family. In terms of assembly, homotrimer.

It localises to the cytoplasm. It carries out the reaction AMP + ATP = 2 ADP. The chain is Adenylate kinase (adkA) from Saccharolobus solfataricus (strain ATCC 35092 / DSM 1617 / JCM 11322 / P2) (Sulfolobus solfataricus).